Here is a 327-residue protein sequence, read N- to C-terminus: Zinc finger C2HC domain-containing protein 1A (327 aa).

Residues 13-42 (ELVPCKICGRSFFPKVLKKHVPICQKTAAK) form a C2HC/C3H-type 1 zinc finger. The Zn(2+) site is built by Cys17, Cys20, His32, and Cys36. Disordered stretches follow at residues 40-96 (AAKR…KHEE) and 108-131 (NQVIKDGGPLPPPPPPSYDPDYIQ). Positions 46 to 56 (VFDSGRQRAEG) are enriched in basic and acidic residues. A compositionally biased stretch (low complexity) spans 63-76 (KPIKPKLQSSSSSS). Pro residues predominate over residues 116-125 (PLPPPPPPSY). The C2HC/C3H-type 2 zinc-finger motif lies at 128-157 (DYIQCPYCQRRFGENAADRHIKFCKEQASR). Positions 132, 135, 147, and 151 each coordinate Zn(2+). Positions 154-271 (QASRISNKSK…NPSTGIGMNK (118 aa)) are disordered. Residues 187-199 (NSPTASSVSSRLP) are compositionally biased toward polar residues. Over residues 211–229 (GIPSSKPSSTGSIKSTPSG) the composition is skewed to low complexity. 2 stretches are compositionally biased toward polar residues: residues 233-245 (LRNNSSSLTSPPS) and 255-267 (VSQSSLRNPSTGI).

It belongs to the ZC2HC1 family. Zn(2+) serves as cofactor.

This Danio rerio (Zebrafish) protein is Zinc finger C2HC domain-containing protein 1A (zc2hc1a).